A 718-amino-acid polypeptide reads, in one-letter code: Probable protein S-acyltransferase 19 (718 aa).

Transmembrane regions (helical) follow at residues Val16–Phe36 and Ile41–Tyr61. The interval Glu100–Gly125 is disordered. Over residues Ser103–Lys124 the composition is skewed to polar residues. Residues Leu174–Ala224 enclose the DHHC domain. The active-site S-palmitoyl cysteine intermediate is Cys204. 2 consecutive transmembrane segments (helical) span residues Leu222–Val242 and Ala277–Ile297. Disordered stretches follow at residues Ser454–Glu511, Pro598–Gln649, and Gly664–Lys718. 2 stretches are compositionally biased toward polar residues: residues Cys479–Gly488 and Pro598–Pro626. Residues Asp673–Asp687 are compositionally biased toward basic and acidic residues.

The protein belongs to the DHHC palmitoyltransferase family.

Its subcellular location is the cell membrane. The enzyme catalyses L-cysteinyl-[protein] + hexadecanoyl-CoA = S-hexadecanoyl-L-cysteinyl-[protein] + CoA. Functionally, palmitoyl acyltransferase. In Arabidopsis thaliana (Mouse-ear cress), this protein is Probable protein S-acyltransferase 19 (PAT19).